The following is a 664-amino-acid chain: Transketolase 1 (664 aa).

Residue histidine 26 coordinates substrate. Residues histidine 66 and 114 to 116 (GPL) contribute to the thiamine diphosphate site. Aspartate 155 lines the Mg(2+) pocket. Residues glycine 156 and asparagine 185 each coordinate thiamine diphosphate. Residues asparagine 185 and isoleucine 187 each contribute to the Mg(2+) site. Histidine 260, arginine 357, and serine 384 together coordinate substrate. Residue histidine 260 participates in thiamine diphosphate binding. Residue glutamate 411 is the Proton donor of the active site. Phenylalanine 437 lines the thiamine diphosphate pocket. Positions 461, 469, and 520 each coordinate substrate.

It belongs to the transketolase family. In terms of assembly, homodimer. It depends on Mg(2+) as a cofactor. Ca(2+) serves as cofactor. The cofactor is Mn(2+). Co(2+) is required as a cofactor. Requires thiamine diphosphate as cofactor.

It carries out the reaction D-sedoheptulose 7-phosphate + D-glyceraldehyde 3-phosphate = aldehydo-D-ribose 5-phosphate + D-xylulose 5-phosphate. Its function is as follows. Catalyzes the transfer of a two-carbon ketol group from a ketose donor to an aldose acceptor, via a covalent intermediate with the cofactor thiamine pyrophosphate. The sequence is that of Transketolase 1 (tkt1) from Vibrio vulnificus (strain YJ016).